A 439-amino-acid polypeptide reads, in one-letter code: Ribosomal protein uS12 methylthiotransferase RimO (439 aa).

Residues Asn3–Ser115 enclose the MTTase N-terminal domain. Positions 12, 46, 78, 146, 150, and 153 each coordinate [4Fe-4S] cluster. One can recognise a Radical SAM core domain in the interval Thr132–Ala361.

This sequence belongs to the methylthiotransferase family. RimO subfamily. Requires [4Fe-4S] cluster as cofactor.

Its subcellular location is the cytoplasm. The catalysed reaction is L-aspartate(89)-[ribosomal protein uS12]-hydrogen + (sulfur carrier)-SH + AH2 + 2 S-adenosyl-L-methionine = 3-methylsulfanyl-L-aspartate(89)-[ribosomal protein uS12]-hydrogen + (sulfur carrier)-H + 5'-deoxyadenosine + L-methionine + A + S-adenosyl-L-homocysteine + 2 H(+). Functionally, catalyzes the methylthiolation of an aspartic acid residue of ribosomal protein uS12. The chain is Ribosomal protein uS12 methylthiotransferase RimO from Sulfurimonas denitrificans (strain ATCC 33889 / DSM 1251) (Thiomicrospira denitrificans (strain ATCC 33889 / DSM 1251)).